The sequence spans 60 residues: Large ribosomal subunit protein bL32 (60 aa).

Over residues 1–16 the composition is skewed to basic residues; it reads MAVPRNRHSNARKNIR. The interval 1–20 is disordered; sequence MAVPRNRHSNARKNIRRSHD.

The protein belongs to the bacterial ribosomal protein bL32 family.

The polypeptide is Large ribosomal subunit protein bL32 (rpmF) (Chlamydia pneumoniae (Chlamydophila pneumoniae)).